A 213-amino-acid chain; its full sequence is Imidazole glycerol phosphate synthase subunit HisH (213 aa).

The 211-residue stretch at 3–213 (MIGVIDYGMG…VGIVTGRENG (211 aa)) folds into the Glutamine amidotransferase type-1 domain. Cys81 (nucleophile) is an active-site residue. Catalysis depends on residues His188 and Glu190.

As to quaternary structure, heterodimer of HisH and HisF.

It is found in the cytoplasm. It catalyses the reaction 5-[(5-phospho-1-deoxy-D-ribulos-1-ylimino)methylamino]-1-(5-phospho-beta-D-ribosyl)imidazole-4-carboxamide + L-glutamine = D-erythro-1-(imidazol-4-yl)glycerol 3-phosphate + 5-amino-1-(5-phospho-beta-D-ribosyl)imidazole-4-carboxamide + L-glutamate + H(+). The enzyme catalyses L-glutamine + H2O = L-glutamate + NH4(+). The protein operates within amino-acid biosynthesis; L-histidine biosynthesis; L-histidine from 5-phospho-alpha-D-ribose 1-diphosphate: step 5/9. In terms of biological role, IGPS catalyzes the conversion of PRFAR and glutamine to IGP, AICAR and glutamate. The HisH subunit catalyzes the hydrolysis of glutamine to glutamate and ammonia as part of the synthesis of IGP and AICAR. The resulting ammonia molecule is channeled to the active site of HisF. In Geobacillus thermodenitrificans (strain NG80-2), this protein is Imidazole glycerol phosphate synthase subunit HisH.